The following is a 626-amino-acid chain: Endogenous retrovirus group S71 member 1 Env polyprotein (626 aa).

The signal sequence occupies residues 1-38; sequence MGPEAWVRPLKTAPKPGEAIRLILFIYLSCFFLPVMSS. Residues 39 to 438 are surface protein; it reads EPSYSFLLTS…PPELHPRLHQ (400 aa). Over 39–575 the chain is Extracellular; sequence EPSYSFLLTS…FNWNPWLTTL (537 aa). A CXXC motif is present at residues 302-305; that stretch reads CWLC. Positions 439 to 459 are fusion peptide; that stretch reads AVPLLVPLLAGLSIAGSAAIG. The transmembrane protein stretch occupies residues 439-626; that stretch reads AVPLLVPLLA…KTQYDTLVNN (188 aa). The CKS-17 signature appears at 503–519; sequence LQNCRCLDLLFLSQGGL. Cys520 and Cys527 form a disulfide bridge. The CX6CC signature appears at 520–528; it reads CAALGESCC. A helical transmembrane segment spans residues 576 to 596; sequence ITGLAGPLLILLLSLIFGPCI. At 597–626 the chain is on the cytoplasmic side; sequence LNSFLNFIKQRIASVKLTYLKTQYDTLVNN.

Belongs to the gamma type-C retroviral envelope protein family. HERV class-I T env subfamily. In terms of processing, the CXXC motif is highly conserved across a broad range of retroviral envelope proteins. It is thought to participate in the formation of a labile disulfide bond possibly with the CX6CC motif present in the transmembrane domain. Expressed at higher level in thyroid. Expressed at lower level in adrenal, bone marrow, brain, breast, kidney, ovary, placenta, prostate, skin, testis and trachea.

The protein localises to the cell membrane. Retroviral envelope proteins mediate receptor recognition and membrane fusion during early infection. Endogenous envelope proteins may have kept, lost or modified their original function during evolution. This endogenous envelope protein has lost its original fusogenic properties. This Homo sapiens (Human) protein is Endogenous retrovirus group S71 member 1 Env polyprotein (ERVS71-1).